A 500-amino-acid polypeptide reads, in one-letter code: ATP synthase subunit beta (500 aa).

155 to 162 (GGAGVGKT) is an ATP binding site.

Belongs to the ATPase alpha/beta chains family. In terms of assembly, F-type ATPases have 2 components, CF(1) - the catalytic core - and CF(0) - the membrane proton channel. CF(1) has five subunits: alpha(3), beta(3), gamma(1), delta(1), epsilon(1). CF(0) has three main subunits: a(1), b(2) and c(9-12). The alpha and beta chains form an alternating ring which encloses part of the gamma chain. CF(1) is attached to CF(0) by a central stalk formed by the gamma and epsilon chains, while a peripheral stalk is formed by the delta and b chains.

Its subcellular location is the cell inner membrane. It carries out the reaction ATP + H2O + 4 H(+)(in) = ADP + phosphate + 5 H(+)(out). In terms of biological role, produces ATP from ADP in the presence of a proton gradient across the membrane. The catalytic sites are hosted primarily by the beta subunits. The protein is ATP synthase subunit beta of Azobacteroides pseudotrichonymphae genomovar. CFP2.